The sequence spans 21 residues: Fibrinogen beta chain (21 aa).

A Pyrrolidone carboxylic acid modification is found at glutamine 1. Tyrosine 6 is modified (sulfotyrosine).

As to quaternary structure, heterohexamer; disulfide linked. Contains 2 sets of 3 non-identical chains (alpha, beta and gamma). The 2 heterotrimers are in head to head conformation with the N-termini in a small central domain. Post-translationally, conversion of fibrinogen to fibrin is triggered by thrombin, which cleaves fibrinopeptides A and B from alpha and beta chains, and thus exposes the N-terminal polymerization sites responsible for the formation of the soft clot.

It localises to the secreted. Functionally, cleaved by the protease thrombin to yield monomers which, together with fibrinogen alpha (FGA) and fibrinogen gamma (FGG), polymerize to form an insoluble fibrin matrix. Fibrin has a major function in hemostasis as one of the primary components of blood clots. In addition, functions during the early stages of wound repair to stabilize the lesion and guide cell migration during re-epithelialization. Was originally thought to be essential for platelet aggregation, based on in vitro studies using anticoagulated blood. However subsequent studies have shown that it is not absolutely required for thrombus formation in vivo. Enhances expression of SELP in activated platelets. Maternal fibrinogen is essential for successful pregnancy. Fibrin deposition is also associated with infection, where it protects against IFNG-mediated hemorrhage. May also facilitate the antibacterial immune response via both innate and T-cell mediated pathways. The sequence is that of Fibrinogen beta chain (FGB) from Odocoileus hemionus (Mule deer).